Reading from the N-terminus, the 352-residue chain is Vacuolar protein sorting-associated protein 37C (352 aa).

Phosphoserine is present on Ser-29. A VPS37 C-terminal domain is found at 78–167 (VERCQEQKAK…RRPRALPELA (90 aa)). Residues 162–352 (ALPELAGDVP…HPPGPAWPRY (191 aa)) are disordered. Composition is skewed to pro residues over residues 173 to 185 (KRPP…PQAT), 202 to 213 (YPLPYSPSPGLP), and 319 to 336 (PGQP…PPGT).

The protein belongs to the VPS37 family. In terms of assembly, component of the ESCRT-I complex (endosomal sorting complex required for transport I) which consists of TSG101, VPS28, a VPS37 protein (VPS37A to -D) and MVB12A or MVB12B in a 1:1:1:1 stoichiometry. Interacts with TSG101, VPS28, MVB12A and MVB12B. Component of the ESCRT-I complex (endosomal sorting complex required for transport I) which consists of TSG101, VPS28, a VPS37 protein (VPS37A to -D) and UBAP1 in a 1:1:1:1 stoichiometry. Interacts with HGS and STAM2. Interacts with CEP55. Post-translationally, phosphorylated by TBK1.

The protein localises to the late endosome membrane. In terms of biological role, component of the ESCRT-I complex, a regulator of vesicular trafficking process. Required for the sorting of endocytic ubiquitinated cargos into multivesicular bodies. May be involved in cell growth and differentiation. The chain is Vacuolar protein sorting-associated protein 37C (Vps37c) from Mus musculus (Mouse).